Consider the following 284-residue polypeptide: Diaminopimelate epimerase (284 aa).

Residues asparagine 20, glutamine 53, and asparagine 73 each coordinate substrate. Cysteine 82 (proton donor) is an active-site residue. Substrate contacts are provided by residues 83-84, asparagine 167, asparagine 200, and 218-219; these read GN and ER. Cysteine 227 functions as the Proton acceptor in the catalytic mechanism. 228-229 is a substrate binding site; the sequence is GS.

It belongs to the diaminopimelate epimerase family. As to quaternary structure, homodimer.

It is found in the cytoplasm. The catalysed reaction is (2S,6S)-2,6-diaminopimelate = meso-2,6-diaminopimelate. Its pathway is amino-acid biosynthesis; L-lysine biosynthesis via DAP pathway; DL-2,6-diaminopimelate from LL-2,6-diaminopimelate: step 1/1. Catalyzes the stereoinversion of LL-2,6-diaminopimelate (L,L-DAP) to meso-diaminopimelate (meso-DAP), a precursor of L-lysine and an essential component of the bacterial peptidoglycan. The polypeptide is Diaminopimelate epimerase (Xanthomonas oryzae pv. oryzae (strain MAFF 311018)).